Consider the following 450-residue polypeptide: Citrate/malate-proton symporter (450 aa).

Topologically, residues 1-32 (MGELQTHMQLQTDTIHEGVRKENWFAKAMNIK) are cytoplasmic. The chain crosses the membrane as a helical span at residues 33–53 (VGIIPLPVYALLFILITVFVM). Topologically, residues 54–64 (HHDVKSDILTS) are extracellular. A helical membrane pass occupies residues 65–85 (IAVMAFFGFTFAQIGKSIPIV). At 86 to 87 (RS) the chain is on the cytoplasmic side. A helical transmembrane segment spans residues 88 to 108 (IGGPAILATFIPSAVVYYHLL). Topologically, residues 109–118 (PNDIVKSTTE) are extracellular. The helical transmembrane segment at 119–139 (FTENSNFLYLFIAGIVVGSIL) threads the bilayer. The Cytoplasmic portion of the chain corresponds to 140 to 152 (GMKRETLVKAFMK). The chain crosses the membrane as a helical span at residues 153 to 173 (IFIPLIVGSVTAAIVGLAVGT). The Extracellular segment spans residues 174–217 (LLGLGFQHTLLYIVIPIMAGGVGEGAIPLSIGYSDIMPISQGEA). A helical membrane pass occupies residues 218–238 (FALVLPSIMLGSLCAIILAGL). The Cytoplasmic segment spans residues 239 to 273 (LNRIGKKKPEWTGNGKVDRSEEESPALEESQSGQQ). Residues 249-268 (WTGNGKVDRSEEESPALEES) form a disordered region. A helical transmembrane segment spans residues 274–294 (MFNLSLFASGGILAVSLYLVG). Residue M295 is a topological domain, extracellular. A helical transmembrane segment spans residues 296–316 (LAHDFFGFPAPVAMLLLAVLI). Residues 317–335 (KLFRLVPASIENGAFGVSR) are Cytoplasmic-facing. The chain crosses the membrane as a helical span at residues 336-356 (FFSTAVTYPLLFAIGVSMTPW). Residues 357–364 (DKLVAAFN) lie on the Extracellular side of the membrane. The chain crosses the membrane as a helical span at residues 365-385 (LSNIITILSVVVTMMAVGFFT). At 386 to 428 (GKWLNMYPIETAIINACHSGQGGTGDVAILSAAERLELMPFAQ) the chain is on the cytoplasmic side. A helical transmembrane segment spans residues 429 to 446 (VSTRIGGAITVSLTLLLL). The Extracellular segment spans residues 447-450 (HQFY).

Belongs to the 2-hydroxycarboxylate transporter (2-HCT) (TC 2.A.24) family.

It localises to the cell membrane. The enzyme catalyses citrate(in) + 3 H(+)(in) = citrate(out) + 3 H(+)(out). It carries out the reaction (S)-malate(in) + 2 H(+)(in) = (S)-malate(out) + 2 H(+)(out). The uptake activity is inhibited by divalent metal ions such as Ca(2+), Mg(2+) and Ni(2+). Functionally, proton motive force-driven secondary transporter that catalyzes the uptake of both citrate and malate. Is an electroneutral proton-solute symporter: the number of protons transported is equal to the valence of the transported anions. Translocates the free citrate and malate anions. Citramalate binds to the transporter, but it is not translocated. Is strictly stereoselective, recognizing only the (S)-enantiomers of malate and citramalate. In Bacillus subtilis (strain 168), this protein is Citrate/malate-proton symporter.